We begin with the raw amino-acid sequence, 847 residues long: Bifunctional protein argC, mitochondrial (847 aa).

The segment at 100 to 331 is acetylglutamate kinase; it reads QIVLVKIGGG…PPSTSITITS (232 aa). The N-acetyltransferase domain occupies 352–508; it reads GEVMHSHESP…CLSQSSTYLS (157 aa). An N-acetyl-gamma-glutamyl-phosphate reductase region spans residues 531–846; the sequence is FRVGLIGARG…LDELASIKNE (316 aa). The active site involves C665.

It in the N-terminal section; belongs to the acetylglutamate kinase family. The protein in the C-terminal section; belongs to the NAGSA dehydrogenase family.

Its subcellular location is the mitochondrion. It carries out the reaction N-acetyl-L-glutamate 5-semialdehyde + phosphate + NADP(+) = N-acetyl-L-glutamyl 5-phosphate + NADPH + H(+). The enzyme catalyses N-acetyl-L-glutamate + ATP = N-acetyl-L-glutamyl 5-phosphate + ADP. Its pathway is amino-acid biosynthesis; L-arginine biosynthesis; N(2)-acetyl-L-ornithine from L-glutamate: step 2/4. The protein operates within amino-acid biosynthesis; L-arginine biosynthesis; N(2)-acetyl-L-ornithine from L-glutamate: step 3/4. The polypeptide is Bifunctional protein argC, mitochondrial (argC) (Dictyostelium discoideum (Social amoeba)).